Reading from the N-terminus, the 122-residue chain is Large ribosomal subunit protein uL18 (122 aa).

Positions 1-26 are disordered; that stretch reads MSNLSRKQQTQKRHRRLRRHLKGTAQ. A compositionally biased stretch (basic residues) spans 9-22; that stretch reads QTQKRHRRLRRHLK.

The protein belongs to the universal ribosomal protein uL18 family. In terms of assembly, part of the 50S ribosomal subunit; part of the 5S rRNA/L5/L18/L25 subcomplex. Contacts the 5S and 23S rRNAs.

In terms of biological role, this is one of the proteins that bind and probably mediate the attachment of the 5S RNA into the large ribosomal subunit, where it forms part of the central protuberance. This is Large ribosomal subunit protein uL18 from Prochlorococcus marinus (strain MIT 9313).